The primary structure comprises 1834 residues: Sodium channel protein type 4 subunit alpha (1834 aa).

The Cytoplasmic portion of the chain corresponds to 1–131 (MASSSLPNLV…RSAIKVLIHS (131 aa)). An I repeat occupies 113–448 (MLSPFSIIRR…VVTMAYAEQN (336 aa)). Residues 132 to 150 (LFSMFIMITILPNCVVMTM) traverse the membrane as a helical segment. At 151-157 (SDPPPWP) the chain is on the extracellular side. Residues 158–178 (IHVENTFTGINTFESLIKMLA) form a helical membrane-spanning segment. The Cytoplasmic portion of the chain corresponds to 179 to 192 (RGFCIDDFTFLRDP). The chain crosses the membrane as a helical span at residues 193-210 (WNWLDFSVIMMAYLTEFV). Residues 211–216 (DLGNIS) lie on the Extracellular side of the membrane. N-linked (GlcNAc...) asparagine glycosylation occurs at N214. The helical transmembrane segment at 217–233 (ALRTFRVLRALKTITVI) threads the bilayer. The Cytoplasmic segment spans residues 234-252 (PGLKTIVGALIQSVKKLSD). Residues 253 to 272 (VMILTVFCLSVFALVGLQLF) form a helical membrane-spanning segment. The Extracellular segment spans residues 273 to 385 (MGNLRQKCVR…PNYGYTSHDT (113 aa)). An intrachain disulfide couples C280 to C354. N288, N291, N297, N303, N309, N327, and N356 each carry an N-linked (GlcNAc...) asparagine glycan. A disulfide bridge connects residues C363 and C369. Positions 386–410 (FSWAFLALFRLMIQDYWENLFQLTL) form an intramembrane region, pore-forming. Residues 411–417 (RAAGKTY) are Extracellular-facing. Residues 418 to 438 (MIFFVVIIFLGSFYLINLILA) traverse the membrane as a helical segment. Residues 439-572 (VVTMAYAEQN…NIIHLIVMDP (134 aa)) are Cytoplasmic-facing. The interval 486-525 (EGGEAGGDPAHSKDCNGSLDTSPGEKGPPRQSCSADSGVS) is disordered. The stretch at 554 to 826 (CCTPWVKFKN…QISSWPIKLG (273 aa)) is one II repeat. The chain crosses the membrane as a helical span at residues 573–591 (FVDLGITICIVLNTLFMAM). Over 592-602 (EHYPMTEHFDK) the chain is Extracellular. The chain crosses the membrane as a helical span at residues 603–622 (VLTVGNLVFTGIFTAEMVLK). Over 623–636 (LIALDPYEYFQQGW) the chain is Cytoplasmic. A helical transmembrane segment spans residues 637–656 (NVFDSIIVTLSWVELGLVNV). The Extracellular portion of the chain corresponds to 657-658 (KG). A helical transmembrane segment spans residues 659-676 (LSVLRSFRLVRSLKLAKS). The Cytoplasmic segment spans residues 677 to 692 (WPTLNMFIRIIGNSGG). Residues 693-711 (GLGNLTLVLAIIVVNFSVV) traverse the membrane as a helical segment. Residues 712–740 (GMQLFGKNYKECVCKNASDCALPRWKMCD) lie on the Extracellular side of the membrane. The cysteines at positions 725 and 731 are disulfide-linked. The pore-forming intramembrane region spans 741–761 (FFHSFLIVLRILCGEWIEPMW). Over 762-772 (GFMEVAGQAMF) the chain is Extracellular. The chain crosses the membrane as a helical span at residues 773–791 (LTVLLMVMVNGNLVDLDLF). Over 792-1029 (LALLLNPLNS…ACFKIVEHHW (238 aa)) the chain is Cytoplasmic. 2 disordered regions span residues 853–886 (GDPG…KDLK) and 929–989 (SDLE…QPEE). Over residues 860 to 869 (EAGEAEESAP) the composition is skewed to acidic residues. Residues 870-886 (EDEKKEPPPEDDDKDLK) are compositionally biased toward basic and acidic residues. 2 stretches are compositionally biased toward acidic residues: residues 929–945 (SDLE…FSEP) and 972–989 (EDPE…QPEE). Residues 1010 to 1323 (RGKMWWTLRR…KKYYNAMKKL (314 aa)) form an III repeat. A helical transmembrane segment spans residues 1030–1047 (FKTFNSSLILLNSGTLAF). Over 1048–1060 (EDIYIEQRRVIRT) the chain is Extracellular. The chain crosses the membrane as a helical span at residues 1061–1079 (ILEYADKVFTYIFIMEMLL). The Cytoplasmic segment spans residues 1080–1093 (KWVAYGFKVYFTNA). A helical membrane pass occupies residues 1094–1112 (WCWLDFLIVDVSIISLVAN). Residues 1113 to 1120 (WLGYSELG) lie on the Extracellular side of the membrane. The helical transmembrane segment at 1121–1139 (PIKSLRTLRALRPLRALSR) threads the bilayer. Residues 1140 to 1156 (FEGMRVVVNALLGAIPS) are Cytoplasmic-facing. Residues 1157 to 1176 (IMNVLLVCLIFWVIFSIMGV) traverse the membrane as a helical segment. Residues 1177-1227 (NLFAAKIYYFINTTTSERFDISGVNNKSECESLIHTGQVRWLNVKVNYDNV) lie on the Extracellular side of the membrane. 2 N-linked (GlcNAc...) asparagine glycosylation sites follow: N1188 and N1202. An intramembrane region (pore-forming) is located at residues 1228-1249 (GLGYLSLLQVATFKGWMDIMYS). At 1250 to 1266 (AVDSREQEEQPQYEVNI) the chain is on the extracellular side. The chain crosses the membrane as a helical span at residues 1267-1288 (YMYLYFVIFIIFGSFFTINSLI). Over 1289–1351 (RLIIVNFNQQ…MVYDFVTKQV (63 aa)) the chain is Cytoplasmic. An important for rapid channel inactivation region spans residues 1307–1309 (IFM). The stretch at 1332–1630 (IPRPQNKIQG…WEKFGPDATQ (299 aa)) is one IV repeat. Residues 1352-1369 (FDITIMILICLNMVTMMV) form a helical membrane-spanning segment. Residues 1370–1380 (ETDDQSQLKVD) are Extracellular-facing. The chain crosses the membrane as a helical span at residues 1381-1399 (ILYNINMVFIIVFTGECVL). Over 1400–1411 (KMFALRQNYFTV) the chain is Cytoplasmic. A helical transmembrane segment spans residues 1412 to 1429 (GWNIFDFVVVILSIVGLA). Residues 1430–1442 (LSDLIQKYFVSPT) are Extracellular-facing. A helical membrane pass occupies residues 1443–1459 (LFRVIRLARIGRVLRLI). Residues 1460-1478 (RGAKGIRTLLFALMMSLPA) are Cytoplasmic-facing. The helical transmembrane segment at 1479–1496 (LFNIGLLLILVMFIYSIF) threads the bilayer. Topologically, residues 1497 to 1518 (GMSNFAYVKKESGIDDMFNFET) are extracellular. Residues 1519-1541 (FGNSIICLFEITTSAGWDGLLNP) constitute an intramembrane region (pore-forming). Residues 1542–1571 (ILNSGPPDCDPTLENPGTSVRGDCGNPSIG) are Extracellular-facing. C1550 and C1565 form a disulfide bridge. Residues 1572-1594 (ICFFCSYIIISFLIVVNMYIAII) form a helical membrane-spanning segment. The Cytoplasmic segment spans residues 1595-1834 (LENFNVATEE…LHPGVKESLV (240 aa)). The IQ domain maps to 1724–1753 (EEVCAIKIQRAYRRHLLQRSVKQASYMYRH). Residues 1776–1834 (MYGRENGNSGVQNKGEERGSTGDAGPTMGLTPINPSDSALPPSPPPGLPLHPGVKESLV) are disordered.

Belongs to the sodium channel (TC 1.A.1.10) family. Nav1.4/SCN4A subfamily. The Nav1.4 voltage-gated sodium channel consists of an ion-conducting alpha subunit SCN4A which is functional on its own and a regulatory beta subunit SCN1B. SCN1B strongly enhances the presence of SCN4A at the cell surface. SCN1B is also required for rapid channel inactivation and recovery after inactivation. It prevents the decrease of channel activity in response to repetitive, high-frequency depolarizations. Interacts with the syntrophins SNTA1, SNTB1 and SNTB2 (via PDZ domain); probably links SCN4A to the actin cytoskeleton and the extracellular matrix via the dystrophin-associated protein complex and regulates its localization in muscle cells. Interacts with TMEM233; probable regulator of the channel.

Its subcellular location is the cell membrane. The enzyme catalyses Na(+)(in) = Na(+)(out). Its function is as follows. Pore-forming subunit of Nav1.4, a voltage-gated sodium (Nav) channel that directly mediates the depolarizing phase of action potentials in excitable membranes. Navs, also called VGSCs (voltage-gated sodium channels) or VDSCs (voltage-dependent sodium channels), operate by switching between closed and open conformations depending on the voltage difference across the membrane. In the open conformation they allow Na(+) ions to selectively pass through the pore, along their electrochemical gradient. The influx of Na+ ions provokes membrane depolarization, initiating the propagation of electrical signals throughout cells and tissues. Highly expressed in skeletal muscles, Nav1.4 generates the action potential crucial for muscle contraction. In Equus caballus (Horse), this protein is Sodium channel protein type 4 subunit alpha.